We begin with the raw amino-acid sequence, 234 residues long: Filarial antigen Av33 (234 aa).

The N-terminal stretch at 1–17 (MKILSCLLLCTITVLEG) is a signal peptide. Cys-135 and Cys-230 are disulfide-bonded. Positions 204–234 (TSQASEATTIPTTTQTPVEAPETPSFCVPIY) are disordered. The segment covering 211–220 (TTIPTTTQTP) has biased composition (low complexity).

The protein belongs to the protease inhibitor I33 family.

It is found in the secreted. Aspartyl protease inhibitor. The protein is Filarial antigen Av33 of Acanthocheilonema viteae (Filarial nematode worm).